A 368-amino-acid chain; its full sequence is Anaphase-promoting complex subunit MND2 (368 aa).

Disordered regions lie at residues 140-167 (AQNAEGNNEEDFRQHDSREEDPRNNGSI) and 286-336 (RNPY…GITP). The segment covering 149–162 (EDFRQHDSREEDPR) has biased composition (basic and acidic residues). Position 293 is a phosphoserine (Ser-293).

The protein belongs to the APC15 family. In terms of assembly, the APC/C is composed of at least 13 subunits that stay tightly associated throughout the cell cycle: APC1, APC2, APC4, APC5, APC9, APC11, CDC16, CDC23, CDC26, CDC27, DOC1, MND2 and SWM1. MND2 interacts directly with APC1, APC5 and CDC23.

The protein operates within protein modification; protein ubiquitination. Functionally, component of the anaphase promoting complex/cyclosome (APC/C), a cell cycle-regulated E3 ubiquitin-protein ligase complex that controls progression through mitosis and the G1 phase of the cell cycle. The APC/C is thought to confer substrate specificity and, in the presence of ubiquitin-conjugating E2 enzymes, it catalyzes the formation of protein-ubiquitin conjugates that are subsequently degraded by the 26S proteasome. In early mitosis, the APC/C is activated by CDC20 and targets securin PDS1, the B-type cyclin CLB5, and other anaphase inhibitory proteins for proteolysis, thereby triggering the separation of sister chromatids at the metaphase-to-anaphase transition. In late mitosis and in G1, degradation of CLB5 allows activation of the APC/C by CDH1, which is needed to destroy CDC20 and the B-type cyclin CLB2 to allow exit from mitosis and creating the low CDK state necessary for cytokinesis and for reforming prereplicative complexes in G1 prior to another round of replication. The chain is Anaphase-promoting complex subunit MND2 (MND2) from Saccharomyces cerevisiae (strain ATCC 204508 / S288c) (Baker's yeast).